The sequence spans 196 residues: Putative NADH dehydrogenase/NAD(P)H nitroreductase Pnuc_0932 (196 aa).

Belongs to the nitroreductase family. HadB/RutE subfamily. It depends on FMN as a cofactor.

The chain is Putative NADH dehydrogenase/NAD(P)H nitroreductase Pnuc_0932 from Polynucleobacter asymbioticus (strain DSM 18221 / CIP 109841 / QLW-P1DMWA-1) (Polynucleobacter necessarius subsp. asymbioticus).